The chain runs to 362 residues: Aminomethyltransferase (362 aa).

Belongs to the GcvT family. The glycine cleavage system is composed of four proteins: P, T, L and H.

It carries out the reaction N(6)-[(R)-S(8)-aminomethyldihydrolipoyl]-L-lysyl-[protein] + (6S)-5,6,7,8-tetrahydrofolate = N(6)-[(R)-dihydrolipoyl]-L-lysyl-[protein] + (6R)-5,10-methylene-5,6,7,8-tetrahydrofolate + NH4(+). Its function is as follows. The glycine cleavage system catalyzes the degradation of glycine. The sequence is that of Aminomethyltransferase from Pseudothermotoga lettingae (strain ATCC BAA-301 / DSM 14385 / NBRC 107922 / TMO) (Thermotoga lettingae).